A 185-amino-acid chain; its full sequence is ATP-dependent protease subunit HslV (185 aa).

Residue Thr12 is part of the active site. Na(+) is bound by residues Ala168, Cys171, and Thr174.

It belongs to the peptidase T1B family. HslV subfamily. As to quaternary structure, a double ring-shaped homohexamer of HslV is capped on each side by a ring-shaped HslU homohexamer. The assembly of the HslU/HslV complex is dependent on binding of ATP.

It is found in the cytoplasm. It catalyses the reaction ATP-dependent cleavage of peptide bonds with broad specificity.. Its activity is regulated as follows. Allosterically activated by HslU binding. Its function is as follows. Protease subunit of a proteasome-like degradation complex believed to be a general protein degrading machinery. This Cereibacter sphaeroides (strain ATCC 17025 / ATH 2.4.3) (Rhodobacter sphaeroides) protein is ATP-dependent protease subunit HslV.